The following is a 973-amino-acid chain: Coatomer subunit beta (973 aa).

2 HEAT repeats span residues 98–133 (HEMI…REAE) and 134–170 (LLEQ…VSEH). Residue serine 181 is modified to Phosphoserine. HEAT repeat units lie at residues 279 to 317 (NVLV…NNVG) and 318 to 354 (ALEE…SRNA). Serine 540 bears the Phosphoserine mark.

In terms of assembly, oligomeric complex that consists of at least the alpha, beta, beta', gamma, delta, epsilon and zeta subunits. The complex interacts with ARF1 and PAB1. In terms of processing, the N-terminus is blocked.

The protein localises to the cytoplasm. Its subcellular location is the golgi apparatus membrane. The protein resides in the cytoplasmic vesicle. It localises to the COPI-coated vesicle membrane. Functionally, the coatomer is a cytosolic protein complex that binds to dilysine motifs and reversibly associates with Golgi non-clathrin-coated vesicles, which further mediate biosynthetic protein transport from the ER, via the Golgi up to the trans Golgi network. Coatomer complex is required for budding from Golgi membranes, and is essential for the retrograde Golgi-to-ER transport of dilysine-tagged proteins. Required for mitochondrial morphology. The protein is Coatomer subunit beta (SEC26) of Saccharomyces cerevisiae (strain ATCC 204508 / S288c) (Baker's yeast).